A 176-amino-acid polypeptide reads, in one-letter code: MRRDVPQDSVRRNEQIRAREVRLIGAEGEQLGIISRNDAIALAKEKGLDLVEVAATADPPVCRVMDYGKYKYEQQKKKQEAKKRQTVVQIKEIKVRPKTDEHDYQTKLKHVRRFLEEGDRCKVTVFFRGREIVHKDRGLTILDRFVEDTKDLAKLDQEARAEGRTLQMMLAPIPKK.

It belongs to the IF-3 family. In terms of assembly, monomer.

The protein resides in the cytoplasm. Its function is as follows. IF-3 binds to the 30S ribosomal subunit and shifts the equilibrium between 70S ribosomes and their 50S and 30S subunits in favor of the free subunits, thus enhancing the availability of 30S subunits on which protein synthesis initiation begins. In Nitratidesulfovibrio vulgaris (strain ATCC 29579 / DSM 644 / CCUG 34227 / NCIMB 8303 / VKM B-1760 / Hildenborough) (Desulfovibrio vulgaris), this protein is Translation initiation factor IF-3.